The primary structure comprises 174 residues: UPF0340 protein SAR2202 (174 aa).

It belongs to the UPF0340 family.

This chain is UPF0340 protein SAR2202, found in Staphylococcus aureus (strain MRSA252).